The sequence spans 440 residues: MESSMPDTAVAEDYKVRDIGLADWGRKEIRMAEDEMPGLMALREEYGNSKPLAGARIAGCLHMTIQTAVLIETLTALGATVRWSSCNIFSTQDHAAAGIAAAGIPVFAWKGLSEEEFWWCIEQTVRGPDGWTPNMILDDGGDLTVLMHDKYPEMLKDVRGLSEETTTGVHRLWEMAKAGKLLTPAINVNDSVTKSKFDNLYGCRESLVDGIRRGTDVMMAGKIAVVAGFGDVGKGSAASLRNAGCRVLVTEIDPICALQAAMEGYEVVTMDEAASRGDLFVTATGNVDVITIDHMRAMKNRAIVCNIGHFDSEIQIESLRNYRWENVKPQVDEVVFPDGKRLIILSEGRLVNLGNATGHPSFVMSASFTNQVLAQIELWQAKPGQYLPNHVYTLPKHLDEKVAALHLAKVGAKLTKLSDKQAEYIGVSQAGPFKHDLYRY.

Threonine 64, aspartate 139, and glutamate 164 together coordinate substrate. 165 to 167 (TTT) provides a ligand contact to NAD(+). Residues lysine 194 and aspartate 198 each contribute to the substrate site. NAD(+)-binding positions include asparagine 199, 228–233 (GFGDVG), glutamate 251, asparagine 286, 307–309 (IGH), and asparagine 352.

It belongs to the adenosylhomocysteinase family. The cofactor is NAD(+).

It localises to the cytoplasm. The catalysed reaction is S-adenosyl-L-homocysteine + H2O = L-homocysteine + adenosine. It functions in the pathway amino-acid biosynthesis; L-homocysteine biosynthesis; L-homocysteine from S-adenosyl-L-homocysteine: step 1/1. Its function is as follows. May play a key role in the regulation of the intracellular concentration of adenosylhomocysteine. The protein is Adenosylhomocysteinase of Granulibacter bethesdensis (strain ATCC BAA-1260 / CGDNIH1).